Reading from the N-terminus, the 418-residue chain is Serine--tRNA ligase (418 aa).

An L-serine-binding site is contributed by threonine 226–glutamate 228. ATP is bound by residues arginine 257–glutamate 259 and valine 273. Glutamate 280 lines the L-serine pocket. Glutamate 344–serine 347 lines the ATP pocket. Threonine 379 contacts L-serine.

It belongs to the class-II aminoacyl-tRNA synthetase family. Type-1 seryl-tRNA synthetase subfamily. Homodimer. The tRNA molecule binds across the dimer.

Its subcellular location is the cytoplasm. It catalyses the reaction tRNA(Ser) + L-serine + ATP = L-seryl-tRNA(Ser) + AMP + diphosphate + H(+). The enzyme catalyses tRNA(Sec) + L-serine + ATP = L-seryl-tRNA(Sec) + AMP + diphosphate + H(+). The protein operates within aminoacyl-tRNA biosynthesis; selenocysteinyl-tRNA(Sec) biosynthesis; L-seryl-tRNA(Sec) from L-serine and tRNA(Sec): step 1/1. Functionally, catalyzes the attachment of serine to tRNA(Ser). Is also able to aminoacylate tRNA(Sec) with serine, to form the misacylated tRNA L-seryl-tRNA(Sec), which will be further converted into selenocysteinyl-tRNA(Sec). The sequence is that of Serine--tRNA ligase from Mycobacteroides abscessus (strain ATCC 19977 / DSM 44196 / CCUG 20993 / CIP 104536 / JCM 13569 / NCTC 13031 / TMC 1543 / L948) (Mycobacterium abscessus).